The primary structure comprises 729 residues: Solute carrier family 15 member 2 (729 aa).

The segment at 1-34 is disordered; the sequence is MNPFQQNESKETLFSPVSTEETPPRLSSPAKKTP. Residues 1 to 57 are Cytoplasmic-facing; that stretch reads MNPFQQNESKETLFSPVSTEETPPRLSSPAKKTPPKICGSNYPLSIAFIVVNEFCER. Ser-9 bears the Phosphoserine mark. Thr-12 is subject to Phosphothreonine. Ser-28 is subject to Phosphoserine. A helical transmembrane segment spans residues 58–78; sequence FSYYGMKAVLTLYFLYFLHWN. Topologically, residues 79 to 87 are extracellular; sequence EDTSTSVYH. Residues 88 to 108 form a helical membrane-spanning segment; sequence AFSSLCYFTPILGAAIADSWL. Over 109 to 113 the chain is Cytoplasmic; that stretch reads GKFKT. Residues 114–134 traverse the membrane as a helical segment; sequence IIYLSLVNVLGHVIKSLSAFP. The Extracellular portion of the chain corresponds to 135 to 139; that stretch reads ILGGK. The helical transmembrane segment at 140 to 160 threads the bilayer; the sequence is VVHTVLSLVGLCLIALGTGGI. Over 161–183 the chain is Cytoplasmic; that stretch reads KPCVAAFGGDQFEEKHAEERTRY. Residues 184–204 form a helical membrane-spanning segment; that stretch reads FSGFYLAINAGSLISTFITPM. The Extracellular segment spans residues 205-217; that stretch reads LRGDVQCFGEDCY. The chain crosses the membrane as a helical span at residues 218–238; sequence ALAFGVPGLLMVIALVVFAMG. Topologically, residues 239-295 are cytoplasmic; the sequence is SKMYKKPPPEGNIVAQVVKCIWFAISNRFKNRSEDIPKRQHWLDWAAEKYPKQLIMD. Residues 296–316 traverse the membrane as a helical segment; sequence VKTLTRVLFLYIPLPMFWALL. At 317–343 the chain is on the extracellular side; the sequence is DQQGSRWTLQATKMNGNLGFFVLQPDQ. Residues 344–364 form a helical membrane-spanning segment; it reads MQVLNPLLVLIFIPLFDLVIY. The Cytoplasmic segment spans residues 365-380; sequence RLISKCGINFTSLRKM. A helical transmembrane segment spans residues 381–401; sequence AVGMVLACLAFAAAATVEIKI. Topologically, residues 402–611 are extracellular; it reads NEMAPPQPGS…PANKVSIAWQ (210 aa). Positions 402–611 are extracellular domain (ECD); it reads NEMAPPQPGS…PANKVSIAWQ (210 aa). 5 N-linked (GlcNAc...) asparagine glycosylation sites follow: Asn-435, Asn-472, Asn-508, Asn-528, and Asn-587. Residues 612–632 form a helical membrane-spanning segment; the sequence is LPQYALVTAGEVMFSVTGLEF. Residues 633-643 lie on the Cytoplasmic side of the membrane; the sequence is SYSQAPSSMKS. The chain crosses the membrane as a helical span at residues 644-664; sequence VLQAAWLLTVAIGNIIVLVVA. Residues 665 to 674 are Extracellular-facing; it reads QFSGLVQWAE. The chain crosses the membrane as a helical span at residues 675 to 695; sequence FVLFSCLLLVVCLIFSIMGYY. The Cytoplasmic segment spans residues 696–729; sequence YIPIKSEDIQGPEDKQIPHMQGNMINLETKKTKL.

Belongs to the major facilitator superfamily. Proton-dependent oligopeptide transporter (POT/PTR) (TC 2.A.17) family. In terms of assembly, interacts (via extracellular domain region) with trypsin. As to expression, strongly expressed in kidney. Also detected in brain, lung, liver and heart.

Its subcellular location is the apical cell membrane. It is found in the cytoplasmic vesicle. It localises to the phagosome membrane. The protein localises to the cell membrane. The enzyme catalyses a dipeptide(out) + 2 H(+)(out) = a dipeptide(in) + 2 H(+)(in). The catalysed reaction is N-acetyl-D-muramoyl-L-alanyl-D-isoglutamine(out) + 3 H(+)(out) = N-acetyl-D-muramoyl-L-alanyl-D-isoglutamine(in) + 3 H(+)(in). It carries out the reaction glycyl-L-leucine(out) + 2 H(+)(out) = glycyl-L-leucine(in) + 2 H(+)(in). It catalyses the reaction glycyl-L-lysine(out) + 2 H(+)(out) = glycyl-L-lysine(in) + 2 H(+)(in). The enzyme catalyses glycyl-L-glutamate(out) + 3 H(+)(out) = glycyl-L-glutamate(in) + 3 H(+)(in). The catalysed reaction is L-alanyl-L-alanine(out) + 2 H(+)(out) = L-alanyl-L-alanine(in) + 2 H(+)(in). It carries out the reaction an L-amino acid tripeptide(out) + 2 H(+)(out) = an L-amino acid tripeptide(in) + 2 H(+)(in). It catalyses the reaction carnosine(out) + 2 H(+)(out) = carnosine(in) + 2 H(+)(in). Its function is as follows. Proton-coupled amino-acid transporter that transports oligopeptides of 2 to 4 amino acids with a preference for dipeptides. Transports neutral and anionic dipeptides with a proton to peptide stoichiometry of 2:1 or 3:1. In kidney, involved in the absorption of circulating di- and tripeptides from the glomerular filtrate. Can also transport beta-lactam antibiotics, such as the aminocephalosporin cefadroxil, and other antiviral and anticancer drugs. Transports the dipeptide-like aminopeptidase inhibitor bestatin. Also able to transport carnosine. Involved in innate immunity by promoting the detection of microbial pathogens by NOD-like receptors (NLRs). Mediates transport of bacterial peptidoglycans across the plasma membrane or, in macrophages, the phagosome membrane: catalyzes the transport of certain bacterial peptidoglycans, such as muramyl dipeptide (MDP), the NOD2 ligand. The chain is Solute carrier family 15 member 2 from Oryctolagus cuniculus (Rabbit).